A 104-amino-acid chain; its full sequence is Large ribosomal subunit protein uL23 (104 aa).

This sequence belongs to the universal ribosomal protein uL23 family. As to quaternary structure, part of the 50S ribosomal subunit. Contacts protein L29, and trigger factor when it is bound to the ribosome.

One of the early assembly proteins it binds 23S rRNA. One of the proteins that surrounds the polypeptide exit tunnel on the outside of the ribosome. Forms the main docking site for trigger factor binding to the ribosome. This Leptospira interrogans serogroup Icterohaemorrhagiae serovar copenhageni (strain Fiocruz L1-130) protein is Large ribosomal subunit protein uL23.